The following is a 380-amino-acid chain: Phospho-N-acetylmuramoyl-pentapeptide-transferase (380 aa).

A run of 9 helical transmembrane segments spans residues 25-45, 70-90, 98-118, 142-162, 173-193, 209-229, 245-265, 272-294, and 357-377; these read RAAA…PAII, TTPT…VLLW, VLLA…DDYL, VLCG…TLPG, VLVV…VTFI, GLSS…AYVL, GAGE…GFLW, QVFM…AILL, and QVVV…LSTL.

The protein belongs to the glycosyltransferase 4 family. MraY subfamily. It depends on Mg(2+) as a cofactor.

The protein resides in the cell inner membrane. The catalysed reaction is UDP-N-acetyl-alpha-D-muramoyl-L-alanyl-gamma-D-glutamyl-meso-2,6-diaminopimeloyl-D-alanyl-D-alanine + di-trans,octa-cis-undecaprenyl phosphate = di-trans,octa-cis-undecaprenyl diphospho-N-acetyl-alpha-D-muramoyl-L-alanyl-D-glutamyl-meso-2,6-diaminopimeloyl-D-alanyl-D-alanine + UMP. It participates in cell wall biogenesis; peptidoglycan biosynthesis. In terms of biological role, catalyzes the initial step of the lipid cycle reactions in the biosynthesis of the cell wall peptidoglycan: transfers peptidoglycan precursor phospho-MurNAc-pentapeptide from UDP-MurNAc-pentapeptide onto the lipid carrier undecaprenyl phosphate, yielding undecaprenyl-pyrophosphoryl-MurNAc-pentapeptide, known as lipid I. This chain is Phospho-N-acetylmuramoyl-pentapeptide-transferase, found in Gemmatimonas aurantiaca (strain DSM 14586 / JCM 11422 / NBRC 100505 / T-27).